The chain runs to 196 residues: Probable GTP-binding protein EngB (196 aa).

The EngB-type G domain maps to 22–196 (NLPEIALSGR…GNWIEEKISK (175 aa)). GTP contacts are provided by residues 30–37 (GRSNVGKS), 57–61 (GKTQT), 75–78 (DVPG), 142–145 (TKID), and 175–177 (FSS). Residues Ser-37 and Thr-59 each contribute to the Mg(2+) site.

The protein belongs to the TRAFAC class TrmE-Era-EngA-EngB-Septin-like GTPase superfamily. EngB GTPase family. Requires Mg(2+) as cofactor.

Functionally, necessary for normal cell division and for the maintenance of normal septation. The sequence is that of Probable GTP-binding protein EngB from Lactobacillus helveticus (strain DPC 4571).